A 229-amino-acid polypeptide reads, in one-letter code: Uracil-DNA glycosylase (229 aa).

The active-site Proton acceptor is the D70.

Belongs to the uracil-DNA glycosylase (UDG) superfamily. UNG family.

The protein localises to the cytoplasm. The enzyme catalyses Hydrolyzes single-stranded DNA or mismatched double-stranded DNA and polynucleotides, releasing free uracil.. Functionally, excises uracil residues from the DNA which can arise as a result of misincorporation of dUMP residues by DNA polymerase or due to deamination of cytosine. This chain is Uracil-DNA glycosylase, found in Chlamydia trachomatis serovar L2b (strain UCH-1/proctitis).